A 302-amino-acid polypeptide reads, in one-letter code: Bifunctional protein FolD (302 aa).

NADP(+) contacts are provided by residues 165-167, serine 190, and isoleucine 231; that span reads GRS.

The protein belongs to the tetrahydrofolate dehydrogenase/cyclohydrolase family. In terms of assembly, homodimer.

The enzyme catalyses (6R)-5,10-methylene-5,6,7,8-tetrahydrofolate + NADP(+) = (6R)-5,10-methenyltetrahydrofolate + NADPH. It carries out the reaction (6R)-5,10-methenyltetrahydrofolate + H2O = (6R)-10-formyltetrahydrofolate + H(+). It functions in the pathway one-carbon metabolism; tetrahydrofolate interconversion. In terms of biological role, catalyzes the oxidation of 5,10-methylenetetrahydrofolate to 5,10-methenyltetrahydrofolate and then the hydrolysis of 5,10-methenyltetrahydrofolate to 10-formyltetrahydrofolate. This chain is Bifunctional protein FolD, found in Prochlorococcus marinus (strain MIT 9313).